Here is a 95-residue protein sequence, read N- to C-terminus: Histone-like DNA-binding protein (95 aa).

This sequence belongs to the bacterial histone-like protein family.

This Rickettsia typhi (strain ATCC VR-144 / Wilmington) protein is Histone-like DNA-binding protein.